A 338-amino-acid chain; its full sequence is Ferredoxin--NADP reductase (338 aa).

D35, Q43, Y48, A88, F122, D289, and T330 together coordinate FAD.

It belongs to the ferredoxin--NADP reductase type 2 family. In terms of assembly, homodimer. The cofactor is FAD.

It catalyses the reaction 2 reduced [2Fe-2S]-[ferredoxin] + NADP(+) + H(+) = 2 oxidized [2Fe-2S]-[ferredoxin] + NADPH. This Ehrlichia canis (strain Jake) protein is Ferredoxin--NADP reductase.